The sequence spans 731 residues: MATDDSIIVLDDDDEDEAAAQPGPSNPASNPVSPGPEASGPSESHGDGGSSNSGSRKCYKLENEKLFEEFLELCKMQTSDHPEVVPFLHKLQQRAQSAFLASAEFRNILSRVLSRSRNRPAKLYVYINELCTVLKAHSIKKKLNLAPAASAESSGDNPPTDPPSDLTNTETTASEASRTRGSRRQIQRLEQLLALYVAEIQRLQEKELDLSELDDPDSSYLQEARLKRKLIRLFGRLCDLKDCSSLTGKVIEQRIPYRGTRYPEVNRRIERLINKPGPDTFPDYGDVLRAVEKAATRHSLGLPRQQLQLLAQDAFRDVGVRLQERRHLDLIYNFGCHLTDDYRPGVDPALTDPTLARRLRENRTLAMSRLDEVISKYAMMQDKSEEGERQKRRARLLATSQSSDLPKASSDSGEGPSGVASQEDPTTPKAETEDEEDDEESDDEEEEEEEEEEEATEDEDEDLEQLQEDQDDEEEEEGDNEDDKSPASPSPIFRRKEFSNPQKGSGPQEEQQERGLTGTPASPLEASPGLPSTDAESSGEQLQERLLAGESPVSQLSELDMEALPEETIPSPEERGISSSRRKSDSSLPTILENGAAMVTSTSFNGRVSSHPCRDASPPSKRFRKEKKQLGPGPLGNSYVKKQTMAQQDSGWKISVLSTPSSPLASVGPVADSSTRVDSPSHELVTSSLCNPSPSLILQTPQSQSPRPCIYKTSVATQCDPEEIIVLSDSD.

The disordered stretch occupies residues 1 to 56 (MATDDSIIVLDDDDEDEAAAQPGPSNPASNPVSPGPEASGPSESHGDGGSSNSGSR). Positions 1–158 (MATDDSIIVL…ASAESSGDNP (158 aa)) are necessary for interaction with USP7 and ATRX. Ser25 is subject to Phosphoserine. Residues 31–43 (PVSPGPEASGPSE) are compositionally biased toward low complexity. A Glycyl lysine isopeptide (Lys-Gly) (interchain with G-Cter in SUMO2) cross-link involves residue Lys142. The segment at 147–183 (PAASAESSGDNPPTDPPSDLTNTETTASEASRTRGSR) is disordered. Positions 165-176 (DLTNTETTASEA) are enriched in polar residues. Coiled coils occupy residues 177–215 (SRTR…ELDD) and 368–395 (SRLD…RRAR). The interaction with histone H3.3 stretch occupies residues 181–414 (GSRRQIQRLE…LPKASSDSGE (234 aa)). The residue at position 211 (Ser211) is a Phosphoserine. A necessary for interaction with USP7 region spans residues 345–560 (GVDPALTDPT…SPVSQLSELD (216 aa)). Positions 381–639 (QDKSEEGERQ…LGPGPLGNSY (259 aa)) are disordered. The Nuclear localization signal signature appears at 391–395 (KRRAR). Over residues 398 to 412 (ATSQSSDLPKASSDS) the composition is skewed to polar residues. Phosphoserine occurs at positions 409 and 421. Positions 428 to 485 (PKAETEDEEDDEESDDEEEEEEEEEEEATEDEDEDLEQLQEDQDDEEEEEGDNEDDKS) form a coiled coil. Residues 432 to 482 (TEDEEDDEESDDEEEEEEEEEEEATEDEDEDLEQLQEDQDDEEEEEGDNED) are compositionally biased toward acidic residues. Thr456 carries the phosphothreonine modification. Ser485, Ser488, Ser490, and Ser499 each carry phosphoserine. Polar residues predominate over residues 499–509 (SNPQKGSGPQE). Lys503 is subject to N6-acetyllysine. A phosphoserine mark is found at Ser527, Ser551, and Ser571. The segment covering 599-608 (VTSTSFNGRV) has biased composition (polar residues). Ser617 is subject to Phosphoserine. The interaction with SPOP stretch occupies residues 617–731 (SPPSKRFRKE…EEIIVLSDSD (115 aa)). A Glycyl lysine isopeptide (Lys-Gly) (interchain with G-Cter in SUMO1) cross-link involves residue Lys621. Residues 622-628 (RFRKEKK) carry the Nuclear localization signal motif. Ser661, Ser662, Ser679, Ser693, Ser728, and Ser730 each carry phosphoserine. Residues 663 to 688 (PLASVGPVADSSTRVDSPSHELVTSS) are disordered. The segment covering 672–688 (DSSTRVDSPSHELVTSS) has biased composition (polar residues). Residues 724–731 (IIVLSDSD) are sumo interaction motif (SIM).

This sequence belongs to the DAXX family. As to quaternary structure, homomultimer. Interacts (via C-terminus) with TNFRSF6 (via death domain). Interacts with PAX5, SLC2A4/GLUT4, MAP3K5, TGFBR2, phosphorylated dimeric HSPB1/HSP27, CENPC, ETS1, sumoylated PML, UBE2I, MCRS1 and TP53. Interacts (via N-terminus) with HIPK2 and HIPK3. Interacts with HIPK1, which induces translocation from PML/POD/ND10 nuclear bodies to chromatin and enhances association with HDAC1. Interacts (non-phosphorylated) with PAX3, PAX7, DEK, HDAC1, HDAC2, HDAC3, acetylated histone H4 and histones H2A, H2B, H3, H3.3 and H4. Interacts with SPOP; mediating CUL3-dependent proteasomal degradation. Interacts with CBP; the interaction is dependent the sumoylation of CBP and suppresses CBP transcriptional activity via recruitment of HDAC2 directly in the complex with TP53 and HIPK2. Interacts with AXIN1; the interaction stimulates the interaction of DAXX with TP53, stimulates 'Ser-46' phosphorylation of TP53 on and induces cell death on UV irradiation. Interacts with MDM2; the interaction is direct. Interacts with USP7; the interaction is direct and independent of MDM2 and TP53. Part of a complex with DAXX, MDM2 and USP7 under non-stress conditions. Interacts (via N-terminus) with RASSF1 (via C-terminus); the interaction is independent of MDM2 and TP53; RASSF1 isoform A disrupts interactions among MDM2, DAXX and USP7, thus contributing to the efficient activation of TP53 by promoting MDM2 self-ubiquitination in cell-cycle checkpoint control in response to DNA damage. Interacts with ATRX to form the chromatin remodeling complex ATRX:DAXX. Interacts with HSF1 (via homotrimeric form preferentially); this interaction relieves homotrimeric HSF1 from repression of its transcriptional activity by HSP90-dependent multichaperone complex upon heat shock. In terms of processing, sumoylated with SUMO1 on multiple lysine residues. Repressor activity is down-regulated upon Ser-661 phosphorylation. Upon neuronal activation dephosphorylated by calcineurin in a Ca2+ dependent manner at Ser-661; dephosphorylation positively affects histone H3.3 loading and transcriptional activation. Post-translationally, polyubiquitinated; which is promoted by CUL3 and SPOP and results in proteasomal degradation. Ubiquitinated by MDM2; inducing its degradation. Deubiquitinated by USP7; leading to stabilize it.

It is found in the cytoplasm. Its subcellular location is the nucleus. The protein localises to the nucleoplasm. It localises to the PML body. The protein resides in the nucleolus. It is found in the chromosome. Its subcellular location is the centromere. Functionally, transcription corepressor known to repress transcriptional potential of several sumoylated transcription factors. Down-regulates basal and activated transcription. Its transcription repressor activity is modulated by recruiting it to subnuclear compartments like the nucleolus or PML/POD/ND10 nuclear bodies through interactions with MCSR1 and PML, respectively. Seems to regulate transcription in PML/POD/ND10 nuclear bodies together with PML and may influence TNFRSF6-dependent apoptosis thereby. Inhibits transcriptional activation of PAX3 and ETS1 through direct protein-protein interactions. Modulates PAX5 activity; the function seems to involve CREBBP. Acts as an adapter protein in a MDM2-DAXX-USP7 complex by regulating the RING-finger E3 ligase MDM2 ubiquitination activity. Under non-stress condition, in association with the deubiquitinating USP7, prevents MDM2 self-ubiquitination and enhances the intrinsic E3 ligase activity of MDM2 towards TP53, thereby promoting TP53 ubiquitination and subsequent proteasomal degradation. Upon DNA damage, its association with MDM2 and USP7 is disrupted, resulting in increased MDM2 autoubiquitination and consequently, MDM2 degradation, which leads to TP53 stabilization. Acts as a histone chaperone that facilitates deposition of histone H3.3. Acts as a targeting component of the chromatin remodeling complex ATRX:DAXX which has ATP-dependent DNA translocase activity and catalyzes the replication-independent deposition of histone H3.3 in pericentric DNA repeats outside S-phase and telomeres, and the in vitro remodeling of H3.3-containing nucleosomes. Does not affect the ATPase activity of ATRX but alleviates its transcription repression activity. Upon neuronal activation associates with regulatory elements of selected immediate early genes where it promotes deposition of histone H3.3 which may be linked to transcriptional induction of these genes. Required for the recruitment of histone H3.3:H4 dimers to PML-nuclear bodies (PML-NBs); the process is independent of ATRX and facilitated by ASF1A; PML-NBs are suggested to function as regulatory sites for the incorporation of newly synthesized histone H3.3 into chromatin. Proposed to mediate activation of the JNK pathway and apoptosis via MAP3K5 in response to signaling from TNFRSF6 and TGFBR2. Interaction with HSPB1/HSP27 may prevent interaction with TNFRSF6 and MAP3K5 and block DAXX-mediated apoptosis. In contrast, in lymphoid cells JNC activation and TNFRSF6-mediated apoptosis may not involve DAXX. Plays a role as a positive regulator of the heat shock transcription factor HSF1 activity during the stress protein response. The protein is Death domain-associated protein 6 (Daxx) of Rattus norvegicus (Rat).